A 341-amino-acid polypeptide reads, in one-letter code: Anthranilate phosphoribosyltransferase (341 aa).

5-phospho-alpha-D-ribose 1-diphosphate-binding positions include Gly-82, 85–86 (GD), Thr-90, 92–95 (NIST), 110–118 (KHGGRSVSS), and Ser-122. Gly-82 provides a ligand contact to anthranilate. Mg(2+) is bound at residue Ser-94. Residue Arg-168 participates in anthranilate binding. Mg(2+) is bound by residues Asp-227 and Glu-228.

Belongs to the anthranilate phosphoribosyltransferase family. Homodimer. Mg(2+) serves as cofactor.

It carries out the reaction N-(5-phospho-beta-D-ribosyl)anthranilate + diphosphate = 5-phospho-alpha-D-ribose 1-diphosphate + anthranilate. It functions in the pathway amino-acid biosynthesis; L-tryptophan biosynthesis; L-tryptophan from chorismate: step 2/5. Catalyzes the transfer of the phosphoribosyl group of 5-phosphorylribose-1-pyrophosphate (PRPP) to anthranilate to yield N-(5'-phosphoribosyl)-anthranilate (PRA). The protein is Anthranilate phosphoribosyltransferase of Nitrosomonas eutropha (strain DSM 101675 / C91 / Nm57).